The following is a 183-amino-acid chain: ATP synthase subunit b, chloroplastic (183 aa).

Residues 27–49 (LATNLINLTVVVGVLIFFGKGVL) form a helical membrane-spanning segment.

Belongs to the ATPase B chain family. F-type ATPases have 2 components, F(1) - the catalytic core - and F(0) - the membrane proton channel. F(1) has five subunits: alpha(3), beta(3), gamma(1), delta(1), epsilon(1). F(0) has four main subunits: a(1), b(1), b'(1) and c(10-14). The alpha and beta chains form an alternating ring which encloses part of the gamma chain. F(1) is attached to F(0) by a central stalk formed by the gamma and epsilon chains, while a peripheral stalk is formed by the delta, b and b' chains.

Its subcellular location is the plastid. The protein localises to the chloroplast thylakoid membrane. Its function is as follows. F(1)F(0) ATP synthase produces ATP from ADP in the presence of a proton or sodium gradient. F-type ATPases consist of two structural domains, F(1) containing the extramembraneous catalytic core and F(0) containing the membrane proton channel, linked together by a central stalk and a peripheral stalk. During catalysis, ATP synthesis in the catalytic domain of F(1) is coupled via a rotary mechanism of the central stalk subunits to proton translocation. In terms of biological role, component of the F(0) channel, it forms part of the peripheral stalk, linking F(1) to F(0). This Brachypodium distachyon (Purple false brome) protein is ATP synthase subunit b, chloroplastic.